Here is a 227-residue protein sequence, read N- to C-terminus: Probable GTP-binding protein EngB (227 aa).

The 190-residue stretch at 30 to 219 (KKPQIIVVGR…MVKINKNVNE (190 aa)) folds into the EngB-type G domain. GTP contacts are provided by residues 38–45 (GRSNVGKS), 63–67 (GVTLK), 80–83 (DLPG), 160–163 (NKMD), and 197–199 (IGI). Residues S45 and T65 each coordinate Mg(2+).

It belongs to the TRAFAC class TrmE-Era-EngA-EngB-Septin-like GTPase superfamily. EngB GTPase family. The cofactor is Mg(2+).

Its function is as follows. Necessary for normal cell division and for the maintenance of normal septation. The chain is Probable GTP-binding protein EngB from Methanococcus aeolicus (strain ATCC BAA-1280 / DSM 17508 / OCM 812 / Nankai-3).